A 411-amino-acid chain; its full sequence is Small ribosomal subunit protein bS1c (411 aa).

The transit peptide at 1 to 41 (MASLAQQLAGGLRCPPLSNSNLSKPFSPKHTLKPRFSPIVS) directs the protein to the chloroplast. 3 S1 motif domains span residues 96-166 (GSRV…LSLR), 184-248 (DVVV…MSNR), and 261-329 (GSVV…LSTK).

This sequence belongs to the bacterial ribosomal protein bS1 family. Component of the chloroplast small ribosomal subunit (SSU). Mature 70S chloroplast ribosomes of higher plants consist of a small (30S) and a large (50S) subunit. The 30S small subunit contains 1 molecule of ribosomal RNA (16S rRNA) and 24 different proteins. The 50S large subunit contains 3 rRNA molecules (23S, 5S and 4.5S rRNA) and 33 different proteins.

The protein resides in the plastid. The protein localises to the chloroplast. Functionally, component of the chloroplast ribosome (chloro-ribosome), a dedicated translation machinery responsible for the synthesis of chloroplast genome-encoded proteins, including proteins of the transcription and translation machinery and components of the photosynthetic apparatus. Actively engaged in the initiation complex formation via a strong mRNA-binding activity. Possesses a poly(A)-binding activity which might play a role as a control element in chloroplast mRNA translation. In Spinacia oleracea (Spinach), this protein is Small ribosomal subunit protein bS1c (RPS1).